A 610-amino-acid polypeptide reads, in one-letter code: Dapper homolog 3 (610 aa).

The residue at position 6 (Ser6) is a Phosphoserine. 3 disordered regions span residues 50-76, 102-179, and 200-579; these read PGMGGAEAEDEEDAEEDEDAAAARRAA, LESG…SVGA, and TCSS…PAGP. Acidic residues predominate over residues 56–69; that stretch reads EAEDEEDAEEDEDA. Residues 63–87 adopt a coiled-coil conformation; sequence AEEDEDAAAARRAAAALEEQLEALP. Residues 120-138 are compositionally biased toward low complexity; sequence DPSSTGGPDSPPSTFCGDS. Ser165 and Ser237 each carry phosphoserine. Arg255 bears the Omega-N-methylarginine mark. The segment covering 317–331 has biased composition (pro residues); sequence PPEPAPPAAASPPSS. Residues 344–356 are compositionally biased toward low complexity; sequence PGAPAASRGLPGR. 2 positions are modified to phosphoserine: Ser409 and Ser456. Over residues 475-485 the composition is skewed to pro residues; it reads PRGPAPSPSAP. Low complexity predominate over residues 524–545; sequence ESESSASEGESPAFSSASSDSD. The span at 566–576 shows a compositional bias: gly residues; sequence GPGGAAGGGTP. Residues 607–610 carry the PDZ-binding motif; sequence MTTV.

It belongs to the dapper family. Can form homodimers and heterodimers with DACT1 or DACT3. Interacts with CSNK1D, PKA catalytic subunit, PKC-type kinase, DVL1, DVL2, DVL3, VANGL1, VANGL2 and CTNND1. Expressed in brain and uterus.

May be involved in regulation of intracellular signaling pathways during development. Specifically thought to play a role in canonical and/or non-canonical Wnt signaling pathways through interaction with DSH (Dishevelled) family proteins. The chain is Dapper homolog 3 (Dact3) from Mus musculus (Mouse).